We begin with the raw amino-acid sequence, 787 residues long: MDSPSNSIQNLQQEAQGSSSAQLADHDHDRVSMAMPLQTDQSVSVSQSSDNLRRSRRVPKPRTSIYDEYEEELKERANKPKRKRPAPPKKKAPSTQNSKSNDKVEKKKTTSIAKDGKPTLKTNDKKVAPKPKPAHEQVEPALIPSNWTSVIPLLTSDFKNQYSVISRLKNPNMKPVPYAGDIIKLMAFINKFSSFFHSDLQNLSFQDFEVGLDLYPGDPNGSAAGIVKGPEDTSLLLYPDFMAIKDIVYCQDKMNLLFLSLLDLTFTENFDGKSAKKKGPLTTWENLKSSSKKVFSNPLYRLRLVAREWGYPREWRQQLPSDQDISKPKTALFEQDEQTPVVDPSHPEILTPNIYTWNANEPLPLESNPLYNREMDKNGILALKPMDRVVLLRALTDWCASHSSAIHDEIYKLTHGKKDPVFGIQTQQVPRYTIEGVDNTINQFKKLCSLIQSRYEIRSKKKHFVKQLKEGKKPDLSRKLEILKEIKAELKNAVKSEKDELLFSLYDKWVPLFEGELPDQPLANPFSERLYKLRLQEFFLGRVPHIGDFYMPRLHSYGDSLEMSTFTDLRNLQALLSKFKNNEYNAFTLFENDGQSMSAQFKLFYHDTPSLAHDVARGRNTSGKVYWYELCHDSATLLEFLEFLDYKIVKPQDEKKEGNEKEKEALNNEAHILEQKSTTDNNPSINTNPLPKDAKYNTARKKLQILKEFLSDYYFILRQFEQMKVQFADMKPGKRQLRRIQRQTVNYNTEYDSEEYVDDEEDDEADIYDDNDNDSSFDDGRVKRQRT.

Positions 1–22 (MDSPSNSIQNLQQEAQGSSSAQ) are enriched in polar residues. 3 disordered regions span residues 1–137 (MDSP…AHEQ), 672–693 (ILEQKSTTDNNPSINTNPLPKD), and 749–787 (TEYDSEEYVDDEEDDEADIYDDNDNDSSFDDGRVKRQRT). The span at 40–50 (DQSVSVSQSSD) shows a compositional bias: low complexity. The span at 79 to 92 (KPKRKRPAPPKKKA) shows a compositional bias: basic residues. Residues 100 to 137 (SNDKVEKKKTTSIAKDGKPTLKTNDKKVAPKPKPAHEQ) show a composition bias toward basic and acidic residues. Residues 675 to 689 (QKSTTDNNPSINTNP) show a composition bias toward polar residues. Over residues 751–777 (YDSEEYVDDEEDDEADIYDDNDNDSSF) the composition is skewed to acidic residues. The span at 778 to 787 (DDGRVKRQRT) shows a compositional bias: basic and acidic residues.

Component of the ISW1A complex, which at least consists of ISW1 and IOC3.

The protein resides in the nucleus. Functions as a component of the ISW1A complex, which acts in remodeling the chromatin by catalyzing an ATP-dependent alteration in the structure of nucleosomal DNA. The ISW1A complex represses gene expression at initiation through specific positioning of a promoter proximal dinucleosome. The protein is ISWI one complex protein 3 (IOC3) of Saccharomyces cerevisiae (strain ATCC 204508 / S288c) (Baker's yeast).